We begin with the raw amino-acid sequence, 265 residues long: 3-methyl-2-oxobutanoate hydroxymethyltransferase (265 aa).

Residues aspartate 45 and aspartate 84 each contribute to the Mg(2+) site. 3-methyl-2-oxobutanoate is bound by residues 45–46 (DS), aspartate 84, and lysine 112. Position 114 (glutamate 114) interacts with Mg(2+). Glutamate 182 acts as the Proton acceptor in catalysis.

It belongs to the PanB family. In terms of assembly, homodecamer; pentamer of dimers. Mg(2+) is required as a cofactor.

It localises to the cytoplasm. The enzyme catalyses 3-methyl-2-oxobutanoate + (6R)-5,10-methylene-5,6,7,8-tetrahydrofolate + H2O = 2-dehydropantoate + (6S)-5,6,7,8-tetrahydrofolate. The protein operates within cofactor biosynthesis; (R)-pantothenate biosynthesis; (R)-pantoate from 3-methyl-2-oxobutanoate: step 1/2. Functionally, catalyzes the reversible reaction in which hydroxymethyl group from 5,10-methylenetetrahydrofolate is transferred onto alpha-ketoisovalerate to form ketopantoate. The chain is 3-methyl-2-oxobutanoate hydroxymethyltransferase from Baumannia cicadellinicola subsp. Homalodisca coagulata.